We begin with the raw amino-acid sequence, 341 residues long: L-threonine 3-dehydrogenase (341 aa).

Cys38 contributes to the Zn(2+) binding site. Residues Thr40 and His43 each act as charge relay system in the active site. Zn(2+) contacts are provided by His63, Glu64, Cys93, Cys96, Cys99, and Cys107. NAD(+) contacts are provided by residues Ile175, Asp195, Arg200, 262–264 (LGI), and 286–287 (IY).

It belongs to the zinc-containing alcohol dehydrogenase family. In terms of assembly, homotetramer. Requires Zn(2+) as cofactor.

It localises to the cytoplasm. The catalysed reaction is L-threonine + NAD(+) = (2S)-2-amino-3-oxobutanoate + NADH + H(+). Its pathway is amino-acid degradation; L-threonine degradation via oxydo-reductase pathway; glycine from L-threonine: step 1/2. Its function is as follows. Catalyzes the NAD(+)-dependent oxidation of L-threonine to 2-amino-3-ketobutyrate. In Solibacter usitatus (strain Ellin6076), this protein is L-threonine 3-dehydrogenase.